The primary structure comprises 221 residues: 2-amino-5-formylamino-6-ribosylaminopyrimidin-4(3H)-one 5'-monophosphate deformylase (221 aa).

The Fe cation site is built by glutamate 29, histidine 31, aspartate 40, and histidine 108.

Belongs to the creatininase superfamily. FAPy deformylase family. Homodimer. Requires Fe(2+) as cofactor. It depends on Zn(2+) as a cofactor.

It catalyses the reaction 2-amino-5-formylamino-6-(5-phospho-D-ribosylamino)pyrimidin-4(3H)-one + H2O = 2,5-diamino-6-(1-D-ribosylamino)pyrimidin-4(3H)-one 5'-phosphate + formate + H(+). Its pathway is cofactor biosynthesis; coenzyme F420 biosynthesis. It participates in cofactor biosynthesis; riboflavin biosynthesis. Functionally, catalyzes the hydrolysis of the formamide of 2-amino-5-formylamino-6-ribosylamino-4(3H)-pyrimidinone 5'-monophosphate (FAPy) to form 2,5-diamino-6-ribosylamino-4(3H)-pyrimidinone 5'-phosphate (APy). The sequence is that of 2-amino-5-formylamino-6-ribosylaminopyrimidin-4(3H)-one 5'-monophosphate deformylase from Methanococcus maripaludis (strain DSM 14266 / JCM 13030 / NBRC 101832 / S2 / LL).